The primary structure comprises 285 residues: Undecaprenyl-diphosphatase 2 (285 aa).

8 helical membrane passes run 5-25, 47-67, 86-106, 122-142, 156-176, 198-218, 235-255, and 265-285; these read MDLL…LLPV, MTFL…VYFW, WYVL…QSLI, LFSN…LIIL, LPSA…RGFS, FSFA…LVRL, SLLL…LLAL, and GRWY…LTLA.

Belongs to the UppP family.

It localises to the cell inner membrane. It catalyses the reaction di-trans,octa-cis-undecaprenyl diphosphate + H2O = di-trans,octa-cis-undecaprenyl phosphate + phosphate + H(+). Its function is as follows. Catalyzes the dephosphorylation of undecaprenyl diphosphate (UPP). Confers resistance to bacitracin. This Acinetobacter baylyi (strain ATCC 33305 / BD413 / ADP1) protein is Undecaprenyl-diphosphatase 2.